We begin with the raw amino-acid sequence, 541 residues long: Arginine--tRNA ligase (541 aa).

The 'HIGH' region signature appears at 119-129 (ANPTGPLHIGH).

This sequence belongs to the class-I aminoacyl-tRNA synthetase family. As to quaternary structure, monomer.

It localises to the cytoplasm. The enzyme catalyses tRNA(Arg) + L-arginine + ATP = L-arginyl-tRNA(Arg) + AMP + diphosphate. The chain is Arginine--tRNA ligase from Helicobacter pylori (strain Shi470).